We begin with the raw amino-acid sequence, 159 residues long: Protein-export protein SecB (159 aa).

This sequence belongs to the SecB family. In terms of assembly, homotetramer, a dimer of dimers. One homotetramer interacts with 1 SecA dimer.

It is found in the cytoplasm. Its function is as follows. One of the proteins required for the normal export of preproteins out of the cell cytoplasm. It is a molecular chaperone that binds to a subset of precursor proteins, maintaining them in a translocation-competent state. It also specifically binds to its receptor SecA. In Pseudomonas fluorescens (strain SBW25), this protein is Protein-export protein SecB.